A 401-amino-acid polypeptide reads, in one-letter code: Multidrug resistance protein MdtH (401 aa).

Helical transmembrane passes span 13 to 33, 34 to 54, 88 to 108, 139 to 159, 164 to 184, 211 to 231, 248 to 268, 275 to 295, 298 to 318, 341 to 361, and 366 to 386; these read YFLIIDNMFVVIGFYAVFPLI, SIHFVEQLGWTAFLVGFALGL, IGFIIMSLAHTPTLLCAACIL, ILMLEDSICAIIGITLGSWLL, FQLVCLTGAILFFIAGMFNAW, FIIYTLTLSGYYILSAQVMLM, YIYITEAILSLLLIIPITYWM, ETRLMLGLVIMIISLSPIGSV, LYELLILISLFYIGSIVAEPA, LSLALGGTLGYSGGGWLYDLG, and FYQLPWIALSIIGTITVLILY.

This sequence belongs to the major facilitator superfamily. DHA1 family. MdtH (TC 2.A.1.2.21) subfamily.

The protein resides in the cell inner membrane. The chain is Multidrug resistance protein MdtH from Blochmanniella floridana.